We begin with the raw amino-acid sequence, 488 residues long: 3-octaprenyl-4-hydroxybenzoate carboxy-lyase (488 aa).

Asparagine 172 provides a ligand contact to Mn(2+). Prenylated FMN-binding positions include isoleucine 175–arginine 177, arginine 189–leucine 191, and arginine 194–glycine 195. Mn(2+) is bound at residue glutamate 238. The active-site Proton donor is the aspartate 287.

Belongs to the UbiD family. Homohexamer. The cofactor is prenylated FMN. Mn(2+) serves as cofactor.

It is found in the cell membrane. It catalyses the reaction a 4-hydroxy-3-(all-trans-polyprenyl)benzoate + H(+) = a 2-(all-trans-polyprenyl)phenol + CO2. The protein operates within cofactor biosynthesis; ubiquinone biosynthesis. In terms of biological role, catalyzes the decarboxylation of 3-octaprenyl-4-hydroxy benzoate to 2-octaprenylphenol, an intermediate step in ubiquinone biosynthesis. The chain is 3-octaprenyl-4-hydroxybenzoate carboxy-lyase from Pseudomonas syringae pv. syringae (strain B728a).